The following is a 430-amino-acid chain: Phosphomethylpyrimidine synthase 2 (430 aa).

Substrate contacts are provided by residues Asn66, Met95, Tyr124, His164, 186–188 (SRG), 227–230 (DGFR), and Glu266. A Zn(2+)-binding site is contributed by His270. Residue Tyr293 coordinates substrate. Residue His334 participates in Zn(2+) binding. [4Fe-4S] cluster contacts are provided by Cys411, Cys414, and Cys418.

The protein belongs to the ThiC family. In terms of assembly, homodimer. [4Fe-4S] cluster serves as cofactor.

It carries out the reaction 5-amino-1-(5-phospho-beta-D-ribosyl)imidazole + S-adenosyl-L-methionine = 4-amino-2-methyl-5-(phosphooxymethyl)pyrimidine + CO + 5'-deoxyadenosine + formate + L-methionine + 3 H(+). Its pathway is cofactor biosynthesis; thiamine diphosphate biosynthesis. In terms of biological role, catalyzes the synthesis of the hydroxymethylpyrimidine phosphate (HMP-P) moiety of thiamine from aminoimidazole ribotide (AIR) in a radical S-adenosyl-L-methionine (SAM)-dependent reaction. This chain is Phosphomethylpyrimidine synthase 2, found in Syntrophotalea carbinolica (strain DSM 2380 / NBRC 103641 / GraBd1) (Pelobacter carbinolicus).